The following is a 146-amino-acid chain: MORN repeat-containing protein 4 (146 aa).

MORN repeat units lie at residues 16-38 (YRGE…DGGT), 39-61 (YLGH…DGSR), 62-84 (YEGE…DNMT), and 85-107 (FEGE…DGSH).

Interacts with MYO3A.

The protein localises to the cytoplasm. Its subcellular location is the cell projection. It localises to the filopodium tip. The protein resides in the stereocilium. Its function is as follows. Plays a role in promoting axonal degeneration following neuronal injury by toxic insult or trauma. This is MORN repeat-containing protein 4 (MORN4) from Homo sapiens (Human).